Here is a 738-residue protein sequence, read N- to C-terminus: Elongation factor G, mitochondrial (738 aa).

A disordered region spans residues 1–20 (MCIGPAPTPETEEELPPSPQ). The tr-type G domain maps to 32-320 (RFQRNIGVSA…GVCAYLPNPA (289 aa)). GTP-binding positions include 41 to 48 (AHIDSGKT), 118 to 122 (DTPGH), and 172 to 175 (NKMD).

It belongs to the TRAFAC class translation factor GTPase superfamily. Classic translation factor GTPase family. EF-G/EF-2 subfamily.

It localises to the mitochondrion. Its pathway is protein biosynthesis; polypeptide chain elongation. Mitochondrial GTPase that catalyzes the GTP-dependent ribosomal translocation step during translation elongation. During this step, the ribosome changes from the pre-translocational (PRE) to the post-translocational (POST) state as the newly formed A-site-bound peptidyl-tRNA and P-site-bound deacylated tRNA move to the P and E sites, respectively. Catalyzes the coordinated movement of the two tRNA molecules, the mRNA and conformational changes in the ribosome. The protein is Elongation factor G, mitochondrial of Laccaria bicolor (strain S238N-H82 / ATCC MYA-4686) (Bicoloured deceiver).